The primary structure comprises 1211 residues: DNA polymerase beta (1211 aa).

4 repeat units span residues 1074 to 1077 (KPAG), 1078 to 1081 (KPAG), 1082 to 1085 (NPAG), and 1086 to 1089 (NPAG). Positions 1074–1089 (KPAGKPAGNPAGNPAG) are 4 X 4 AA tandem repeats of [NK]-[P]-A-G.

Belongs to the DNA polymerase type-B family.

It carries out the reaction DNA(n) + a 2'-deoxyribonucleoside 5'-triphosphate = DNA(n+1) + diphosphate. DNA-directed DNA polymerase involved in viral DNA replication. The chain is DNA polymerase beta (DPOL) from African swine fever virus (strain Badajoz 1971 Vero-adapted) (Ba71V).